A 391-amino-acid chain; its full sequence is Phosphoprotein (391 aa).

2 positions are modified to phosphothreonine: T10 and T16. Residues Q54 to Q65 are compositionally biased toward polar residues. Disordered stretches follow at residues Q54 to F98 and P148 to S184. At S69 the chain carries Phosphoserine. Phosphothreonine occurs at positions 91, 150, and 165. At S188 the chain carries Phosphoserine. Positions I216 to G279 are multimerization. Residues A218–Q245 are a coiled coil. Position 250 is a phosphothreonine (T250). At S257 the chain carries Phosphoserine. T258 and T282 each carry phosphothreonine. A phosphoserine mark is found at S292 and S294. Residue T298 is modified to Phosphothreonine. S301 and S374 each carry phosphoserine. Residues A343 to I391 are interaction with the nucleoprotein. T375 is modified (phosphothreonine).

Belongs to the rubulavirus/avulavirus P protein family. As to quaternary structure, homotetramer. Interacts (via multimerization domain) with polymerase L; this interaction forms the polymerase L-P complex. Interacts (via N-terminus) with N0 (via Ncore); this interaction allows P to chaperon N0 to avoid N polymerization before encapsidation. Interacts (via C-terminus) with N-RNA template; this interaction positions the polymerase on the template for both transcription and replication. Interacts with host RPS6KB1 kinase; this interaction may play a role in the viral replication and transcription.

In terms of biological role, essential cofactor of the RNA polymerase L that plays a central role in the transcription and replication by forming the polymerase complex with RNA polymerase L and recruiting L to the genomic N-RNA template for RNA synthesis. Also plays a central role in the encapsidation of nascent RNA chains by forming the encapsidation complex with the nucleocapsid protein N (N-P complex). Acts as a chaperone for newly synthesized free N protein, so-called N0, allowing encapsidation of nascent RNA chains during replication. The nucleoprotein protein N prevents excessive phosphorylation of P, which leads to down-regulation of viral transcription/ replication. Participates, together with N, in the formation of viral factories (viroplasms), which are large inclusions in the host cytoplasm where replication takes place. The chain is Phosphoprotein from Mumps virus (strain Enders) (MuV).